A 156-amino-acid polypeptide reads, in one-letter code: Protein BUNDLE SHEATH DEFECTIVE 2, chloroplastic (156 aa).

A chloroplast-targeting transit peptide spans Met1–Glu41. Cys78, Cys81, Cys89, Cys92, Cys133, Cys136, Cys144, and Cys147 together coordinate Zn(2+).

Belongs to the BSD2 chaperone family. In terms of assembly, interacts with the RuBisCo large subunit (RbcL) assembled as an intermediate complex made of eight RbcL and eight BSD2 subunits.

It is found in the plastid. The protein localises to the chloroplast stroma. Functionally, chloroplast chaperone required for RuBisCo biogenesis and translational regulation of the RuBisCo large subunit (RbcL). Stabilizes an end-state assembly intermediate of eight RbcL subunits until the small subunits (RBCSs) become available to produce a complete stable RuBisCo complex containing eight small and eight large subunits. The chain is Protein BUNDLE SHEATH DEFECTIVE 2, chloroplastic from Chlamydomonas reinhardtii (Chlamydomonas smithii).